The following is a 587-amino-acid chain: 2-succinyl-5-enolpyruvyl-6-hydroxy-3-cyclohexene-1-carboxylate synthase (587 aa).

The protein belongs to the TPP enzyme family. MenD subfamily. As to quaternary structure, homodimer. The cofactor is Mg(2+). Mn(2+) is required as a cofactor. It depends on thiamine diphosphate as a cofactor.

The enzyme catalyses isochorismate + 2-oxoglutarate + H(+) = 5-enolpyruvoyl-6-hydroxy-2-succinyl-cyclohex-3-ene-1-carboxylate + CO2. The protein operates within quinol/quinone metabolism; 1,4-dihydroxy-2-naphthoate biosynthesis; 1,4-dihydroxy-2-naphthoate from chorismate: step 2/7. It participates in quinol/quinone metabolism; menaquinone biosynthesis. In terms of biological role, catalyzes the thiamine diphosphate-dependent decarboxylation of 2-oxoglutarate and the subsequent addition of the resulting succinic semialdehyde-thiamine pyrophosphate anion to isochorismate to yield 2-succinyl-5-enolpyruvyl-6-hydroxy-3-cyclohexene-1-carboxylate (SEPHCHC). The chain is 2-succinyl-5-enolpyruvyl-6-hydroxy-3-cyclohexene-1-carboxylate synthase from Chloroflexus aurantiacus (strain ATCC 29366 / DSM 635 / J-10-fl).